The chain runs to 234 residues: Octanoyltransferase (234 aa).

Positions 35 to 221 (DGAPELVWFL…AFQQVFASPL (187 aa)) constitute a BPL/LPL catalytic domain. Residues 74 to 81 (RGGQYTYH), 150 to 152 (AIG), and 163 to 165 (GIS) each bind substrate. The active-site Acyl-thioester intermediate is the C181.

It belongs to the LipB family.

The protein localises to the cytoplasm. It catalyses the reaction octanoyl-[ACP] + L-lysyl-[protein] = N(6)-octanoyl-L-lysyl-[protein] + holo-[ACP] + H(+). It participates in protein modification; protein lipoylation via endogenous pathway; protein N(6)-(lipoyl)lysine from octanoyl-[acyl-carrier-protein]: step 1/2. Functionally, catalyzes the transfer of endogenously produced octanoic acid from octanoyl-acyl-carrier-protein onto the lipoyl domains of lipoate-dependent enzymes. Lipoyl-ACP can also act as a substrate although octanoyl-ACP is likely to be the physiological substrate. This is Octanoyltransferase from Hyphomonas neptunium (strain ATCC 15444).